The following is a 58-amino-acid chain: Ribosome biogenesis protein Nop10 (58 aa).

Belongs to the NOP10 family.

Involved in ribosome biogenesis; more specifically in 18S rRNA pseudouridylation and in cleavage of pre-rRNA. The protein is Ribosome biogenesis protein Nop10 of Thermococcus onnurineus (strain NA1).